The following is a 531-amino-acid chain: Peptide chain release factor 3 (531 aa).

One can recognise a tr-type G domain in the interval 10-278; that stretch reads RRRRTFAIIS…SLIEWAPAPK (269 aa). Residues 19-26, 87-91, and 141-144 each bind GTP; these read SHPDAGKT, DTPGH, and NKYD.

It belongs to the TRAFAC class translation factor GTPase superfamily. Classic translation factor GTPase family. PrfC subfamily.

Its subcellular location is the cytoplasm. Its function is as follows. Increases the formation of ribosomal termination complexes and stimulates activities of RF-1 and RF-2. It binds guanine nucleotides and has strong preference for UGA stop codons. It may interact directly with the ribosome. The stimulation of RF-1 and RF-2 is significantly reduced by GTP and GDP, but not by GMP. The protein is Peptide chain release factor 3 of Neisseria meningitidis serogroup A / serotype 4A (strain DSM 15465 / Z2491).